The following is a 348-amino-acid chain: Photosystem II protein D1 (348 aa).

Helical transmembrane passes span 33–50 (YIGWFGILMFPLLVLATV), 122–137 (HFILGAGAYMGREWEF), and 146–160 (WIFVAFSAPLVAASA). Histidine 122 contacts chlorophyll a. Tyrosine 130 serves as a coordination point for pheophytin a. [CaMn4O5] cluster-binding residues include aspartate 174 and glutamate 193. Residues 201–222 (FHILGVAAVFGGSLFSAMHGSL) form a helical membrane-spanning segment. Residue histidine 202 coordinates chlorophyll a. A quinone contacts are provided by residues histidine 219 and 268-269 (SF). Histidine 219 contributes to the Fe cation binding site. Histidine 276 is a binding site for Fe cation. Residues 278 to 292 (FLAAWPVIGIWFTAL) form a helical membrane-spanning segment. Residues histidine 336, glutamate 337, aspartate 346, and alanine 348 each contribute to the [CaMn4O5] cluster site.

This sequence belongs to the reaction center PufL/M/PsbA/D family. In terms of assembly, PSII is composed of 1 copy each of membrane proteins PsbA, PsbB, PsbC, PsbD, PsbE, PsbF, PsbH, PsbI, PsbJ, PsbK, PsbL, PsbM, PsbT, PsbX, PsbY, PsbZ, Psb30/Ycf12, at least 3 peripheral proteins of the oxygen-evolving complex and a large number of cofactors. It forms dimeric complexes. The cofactor is The D1/D2 heterodimer binds P680, chlorophylls that are the primary electron donor of PSII, and subsequent electron acceptors. It shares a non-heme iron and each subunit binds pheophytin, quinone, additional chlorophylls, carotenoids and lipids. D1 provides most of the ligands for the Mn4-Ca-O5 cluster of the oxygen-evolving complex (OEC). There is also a Cl(-1) ion associated with D1 and D2, which is required for oxygen evolution. The PSII complex binds additional chlorophylls, carotenoids and specific lipids.. Tyr-165 forms a radical intermediate that is referred to as redox-active TyrZ, YZ or Y-Z.

Its subcellular location is the plastid. It localises to the chloroplast thylakoid membrane. It carries out the reaction 2 a plastoquinone + 4 hnu + 2 H2O = 2 a plastoquinol + O2. Functionally, photosystem II (PSII) is a light-driven water:plastoquinone oxidoreductase that uses light energy to abstract electrons from H(2)O, generating O(2) and a proton gradient subsequently used for ATP formation. It consists of a core antenna complex that captures photons, and an electron transfer chain that converts photonic excitation into a charge separation. The D1/D2 (PsbA/PsbD) reaction center heterodimer binds P680, the primary electron donor of PSII as well as several subsequent electron acceptors. In Heterocapsa pygmaea (Dinoflagellate), this protein is Photosystem II protein D1.